Reading from the N-terminus, the 101-residue chain is NAD(P)H-quinone oxidoreductase subunit 4L, chloroplastic (101 aa).

Helical transmembrane passes span 2 to 22 (MLEH…YGLI), 32 to 52 (MCLE…SDLF), and 61 to 81 (IFSI…LAIV).

Belongs to the complex I subunit 4L family. In terms of assembly, NDH is composed of at least 16 different subunits, 5 of which are encoded in the nucleus.

Its subcellular location is the plastid. It localises to the chloroplast thylakoid membrane. It carries out the reaction a plastoquinone + NADH + (n+1) H(+)(in) = a plastoquinol + NAD(+) + n H(+)(out). It catalyses the reaction a plastoquinone + NADPH + (n+1) H(+)(in) = a plastoquinol + NADP(+) + n H(+)(out). Its function is as follows. NDH shuttles electrons from NAD(P)H:plastoquinone, via FMN and iron-sulfur (Fe-S) centers, to quinones in the photosynthetic chain and possibly in a chloroplast respiratory chain. The immediate electron acceptor for the enzyme in this species is believed to be plastoquinone. Couples the redox reaction to proton translocation, and thus conserves the redox energy in a proton gradient. The chain is NAD(P)H-quinone oxidoreductase subunit 4L, chloroplastic from Nandina domestica (Heavenly bamboo).